Here is a 384-residue protein sequence, read N- to C-terminus: GTPase Obg (384 aa).

In terms of domain architecture, Obg spans 1-159 (MKFIDEAKIE…RSLQLELKVL (159 aa)). The tract at residues 20–46 (ATSFRREKFVPRGGPDGGDGGKGGSVW) is disordered. The span at 33–43 (GPDGGDGGKGG) shows a compositional bias: gly residues. Residues 160 to 348 (ADVGLLGMPN…LVHQINQYLT (189 aa)) form the OBG-type G domain. Residues 166-173 (GMPNAGKS), 191-195 (FTTLH), 213-216 (DIPG), 284-287 (NKLD), and 329-331 (SAL) each bind GTP. Mg(2+) is bound by residues S173 and T193.

Belongs to the TRAFAC class OBG-HflX-like GTPase superfamily. OBG GTPase family. Monomer. Requires Mg(2+) as cofactor.

The protein resides in the cytoplasm. In terms of biological role, an essential GTPase which binds GTP, GDP and possibly (p)ppGpp with moderate affinity, with high nucleotide exchange rates and a fairly low GTP hydrolysis rate. Plays a role in control of the cell cycle, stress response, ribosome biogenesis and in those bacteria that undergo differentiation, in morphogenesis control. The sequence is that of GTPase Obg from Neisseria meningitidis serogroup B (strain ATCC BAA-335 / MC58).